We begin with the raw amino-acid sequence, 448 residues long: Phosphoglucosamine mutase (448 aa).

Serine 99 serves as the catalytic Phosphoserine intermediate. Serine 99, aspartate 239, aspartate 241, and aspartate 243 together coordinate Mg(2+). Phosphoserine is present on serine 99.

It belongs to the phosphohexose mutase family. Requires Mg(2+) as cofactor. In terms of processing, activated by phosphorylation.

The catalysed reaction is alpha-D-glucosamine 1-phosphate = D-glucosamine 6-phosphate. Functionally, catalyzes the conversion of glucosamine-6-phosphate to glucosamine-1-phosphate. The chain is Phosphoglucosamine mutase from Lachnoclostridium phytofermentans (strain ATCC 700394 / DSM 18823 / ISDg) (Clostridium phytofermentans).